The chain runs to 339 residues: uncharacterized protein (339 aa).

2 consecutive VOC domains span residues 2-127 (EFDY…VRSE) and 141-276 (TIDH…CLEI). H144, H222, and E306 together coordinate Fe cation.

Belongs to the 4HPPD family. The cofactor is Fe cation.

This is an uncharacterized protein from Synechocystis sp. (strain ATCC 27184 / PCC 6803 / Kazusa).